Reading from the N-terminus, the 834-residue chain is Periplasmic nitrate reductase (834 aa).

The tat-type signal signal peptide spans 1 to 29 (MKLSRREFAKANAAAIAAAAAGLPLASTA). The 4Fe-4S Mo/W bis-MGD-type domain occupies 41–97 (LDWNKAPCRFCGTGCSVMVATRDNRVVATHGDVKAEVNRGLNCVKGYFLSKIMYGVD). [4Fe-4S] cluster-binding residues include cysteine 48, cysteine 51, cysteine 55, and cysteine 83. Mo-bis(molybdopterin guanine dinucleotide) is bound by residues lysine 85, glutamine 152, asparagine 177, cysteine 181, 214 to 221 (WGSNMAEM), 245 to 249 (STFEH), 264 to 266 (QTD), methionine 375, glutamine 379, asparagine 485, 511 to 512 (SD), lysine 534, aspartate 561, and 721 to 730 (TGRVLEHWHT). Phenylalanine 797 is a binding site for substrate. Mo-bis(molybdopterin guanine dinucleotide)-binding residues include asparagine 805 and lysine 822.

This sequence belongs to the prokaryotic molybdopterin-containing oxidoreductase family. NasA/NapA/NarB subfamily. In terms of assembly, component of the periplasmic nitrate reductase NapAB complex composed of NapA and NapB. Requires [4Fe-4S] cluster as cofactor. Mo-bis(molybdopterin guanine dinucleotide) is required as a cofactor. Predicted to be exported by the Tat system. The position of the signal peptide cleavage has not been experimentally proven.

The protein resides in the periplasm. It catalyses the reaction 2 Fe(II)-[cytochrome] + nitrate + 2 H(+) = 2 Fe(III)-[cytochrome] + nitrite + H2O. Functionally, catalytic subunit of the periplasmic nitrate reductase complex NapAB. Receives electrons from NapB and catalyzes the reduction of nitrate to nitrite. In Ectopseudomonas mendocina (strain ymp) (Pseudomonas mendocina), this protein is Periplasmic nitrate reductase.